Consider the following 143-residue polypeptide: Small ribosomal subunit protein uS12 (143 aa).

Basic residues predominate over residues 1–19 (MGKPRGLRTARKHVNHRRD). The segment at 1–23 (MGKPRGLRTARKHVNHRRDQRWA) is disordered. At Pro-62 the chain carries 3-hydroxyproline.

Belongs to the universal ribosomal protein uS12 family. Component of the 40S small ribosomal subunit. Hydroxylation at Pro-62 affects translation termination efficiency.

It localises to the cytoplasm. The protein localises to the cytosol. It is found in the rough endoplasmic reticulum. The protein is Small ribosomal subunit protein uS12 (RpS23) of Drosophila melanogaster (Fruit fly).